Here is a 280-residue protein sequence, read N- to C-terminus: Probable formate transporter (280 aa).

A run of 6 helical transmembrane segments spans residues 33-49 (LSFVAGAYIAFGGLLAE), 67-83 (LVFGGVFPVGLMLVVIA), 116-133 (SWVFNLVGALFVAYVLAY), 177-195 (FWRAIGCNWLVCLAVYLAV), 204-219 (SFGIWFPIMAFVCIGF), and 253-272 (LGNIVGGAIFVGCIYWFTYL).

Belongs to the FNT transporter (TC 1.A.16) family.

The protein resides in the cell membrane. Functionally, may act as a formate transporter. This Methanobacterium formicicum protein is Probable formate transporter (fdhC).